Consider the following 705-residue polypeptide: 3-hydroxypropionate--CoA ligase [ADP-forming] (705 aa).

The ATP-grasp domain occupies 25-61; sequence KSILKNYGVKVPPYALVTSAEEAAKEAKKIGFPLVMK. 51–61 serves as a coordination point for ATP; that stretch reads AKKIGFPLVMK.

The protein in the N-terminal section; belongs to the acetate CoA ligase beta subunit family. This sequence in the C-terminal section; belongs to the acetate CoA ligase alpha subunit family. Mg(2+) is required as a cofactor. Mn(2+) serves as cofactor.

It carries out the reaction 3-hydroxypropanoate + ATP + CoA = 3-hydroxypropanoyl-CoA + ADP + phosphate. Functionally, involved in thaumarchaeal hydroxypropionate/hydroxybutyrate (HP/HB) cycle, a modified version of the autotrophic HP/HB cycle of Crenarchaeota. Catalyzes the formation of 3-hydroxypropionyl-CoA, ADP and phosphate from 3-hydroxypropionate, coenzyme A (CoA) and ATP. Can also use 4-hydroxybutyrate, propionate and butyrate, with poor catalytic efficiency. The chain is 3-hydroxypropionate--CoA ligase [ADP-forming] from Nitrosopumilus maritimus (strain SCM1).